The primary structure comprises 191 residues: Cytochrome c oxidase assembly protein CtaG (191 aa).

The Cytoplasmic segment spans residues 1-9; that stretch reads MALNGPQKT. The chain crosses the membrane as a helical; Signal-anchor for type II membrane protein span at residues 10–30; sequence VVQLVSVVVVMGGLAWASVPF. The Periplasmic segment spans residues 31–191; sequence YDWFCRVTGF…LDAGEKTNTN (161 aa).

The protein belongs to the COX11/CtaG family.

It is found in the cell inner membrane. Functionally, exerts its effect at some terminal stage of cytochrome c oxidase synthesis, probably by being involved in the insertion of the copper B into subunit I. The sequence is that of Cytochrome c oxidase assembly protein CtaG from Ruegeria pomeroyi (strain ATCC 700808 / DSM 15171 / DSS-3) (Silicibacter pomeroyi).